The sequence spans 428 residues: Enolase (428 aa).

Gln163 serves as a coordination point for (2R)-2-phosphoglycerate. Catalysis depends on Glu205, which acts as the Proton donor. 3 residues coordinate Mg(2+): Asp242, Glu285, and Asp312. (2R)-2-phosphoglycerate contacts are provided by Lys337, Arg366, Ser367, and Lys388. Lys337 (proton acceptor) is an active-site residue.

The protein belongs to the enolase family. The cofactor is Mg(2+).

The protein localises to the cytoplasm. It is found in the secreted. It localises to the cell surface. It catalyses the reaction (2R)-2-phosphoglycerate = phosphoenolpyruvate + H2O. Its pathway is carbohydrate degradation; glycolysis; pyruvate from D-glyceraldehyde 3-phosphate: step 4/5. Functionally, catalyzes the reversible conversion of 2-phosphoglycerate (2-PG) into phosphoenolpyruvate (PEP). It is essential for the degradation of carbohydrates via glycolysis. The polypeptide is Enolase (Persephonella marina (strain DSM 14350 / EX-H1)).